The chain runs to 287 residues: MRRVVMTQLKLLFAVFYCRFQQNKLTQAAGALTYSTMLAIVPLVMVVFAIFSAFPMFNEAAAELKTFIFDNFSPSAGDTVGQYIDEFVVNSKSMSAVGIISLIAVALLLINQIDRTINDIWNSKNRNFIFSMTIYWTLLTLGPIFIGMSFAINTYIRSIIAFEGDLGLPFGLKLLSFVPFLLTWLSFSLIYTLVPNTKVNFRYAAVGALVAAIFFTLGKKAFAWYMATFPSYQLIYGAMATLPITLLWIQLSWLFILLGAQLTAVLGDMRLIKSGDLNLTAIKEKTE.

6 helical membrane passes run 37–57 (MLAI…FPMF), 93–113 (SMSA…INQI), 128–148 (FIFS…FIGM), 174–194 (LLSF…YTLV), 204–224 (AAVG…AFAW), and 238–258 (AMAT…FILL).

This sequence belongs to the UPF0761 family.

Its subcellular location is the cell inner membrane. In Mannheimia succiniciproducens (strain KCTC 0769BP / MBEL55E), this protein is UPF0761 membrane protein MS0032.